The following is a 462-amino-acid chain: Argininosuccinate lyase (462 aa).

The protein belongs to the lyase 1 family. Argininosuccinate lyase subfamily.

The protein localises to the cytoplasm. It catalyses the reaction 2-(N(omega)-L-arginino)succinate = fumarate + L-arginine. Its pathway is amino-acid biosynthesis; L-arginine biosynthesis; L-arginine from L-ornithine and carbamoyl phosphate: step 3/3. The protein is Argininosuccinate lyase of Lachnoclostridium phytofermentans (strain ATCC 700394 / DSM 18823 / ISDg) (Clostridium phytofermentans).